The chain runs to 197 residues: Small ribosomal subunit protein uS4y (197 aa).

One can recognise an S4 RNA-binding domain in the interval 109 to 183 (RRLQTIVFKS…VKRRNERAGA (75 aa)). A disordered region spans residues 161-197 (SLTSPFGGGRPGRVKRRNERAGAKKASGGDGDEDDEE).

Belongs to the universal ribosomal protein uS4 family. In terms of assembly, binds to the translation initiation factors TIF3E1.

The protein is Small ribosomal subunit protein uS4y (RPS9C) of Arabidopsis thaliana (Mouse-ear cress).